We begin with the raw amino-acid sequence, 381 residues long: Probable peptidoglycan glycosyltransferase FtsW (381 aa).

The Cytoplasmic segment spans residues 1-15; that stretch reads MNNKKKIVKIFFYDK. The chain crosses the membrane as a helical span at residues 16-36; sequence ILFFLLISLSIIGIIIVSSAS. Residues 37–53 are Periplasmic-facing; that stretch reads ISFGIRLHNDYFYFAKR. A helical transmembrane segment spans residues 54 to 74; that stretch reads NLLYFFLSFFLFFQIIRIPIN. Topologically, residues 75 to 81 are cytoplasmic; it reads QLEKYNK. A helical transmembrane segment spans residues 82 to 102; the sequence is IALLINLFLLIIVFIIGNSIN. The Periplasmic portion of the chain corresponds to 103 to 109; sequence GAIRWIK. A helical transmembrane segment spans residues 110–130; it reads IGFFSIQPSECSKLILFFYIS. Over 131-143 the chain is Cytoplasmic; sequence DYIVKKNKELKNK. A helical membrane pass occupies residues 144 to 164; that stretch reads LWGFLKPIIIMLIFVILLLMQ. Over 165–166 the chain is Periplasmic; it reads PD. 2 helical membrane-spanning segments follow: residues 167–187 and 188–208; these read LGNS…AGIN and LWKC…LIIF. At 209–278 the chain is on the periplasmic side; sequence KPYRIRRILS…FSILGEELGY (70 aa). The chain crosses the membrane as a helical span at residues 279–299; sequence IGSIIILIMLFFVIFRIFLIG. Residues 300–317 are Cytoplasmic-facing; it reads KNSFIQKKFFSGYFSFSV. The helical transmembrane segment at 318-338 threads the bilayer; the sequence is GIWISLQTIMNVGGVIGILPI. Residues 339–343 lie on the Periplasmic side of the membrane; sequence KGLTL. The chain crosses the membrane as a helical span at residues 344–364; sequence PFISYGGSSLITIFSAIAIVI. Over 365–381 the chain is Cytoplasmic; the sequence is RSDFELRINKYQAYLKQ.

This sequence belongs to the SEDS family. FtsW subfamily.

The protein resides in the cell inner membrane. The enzyme catalyses [GlcNAc-(1-&gt;4)-Mur2Ac(oyl-L-Ala-gamma-D-Glu-L-Lys-D-Ala-D-Ala)](n)-di-trans,octa-cis-undecaprenyl diphosphate + beta-D-GlcNAc-(1-&gt;4)-Mur2Ac(oyl-L-Ala-gamma-D-Glu-L-Lys-D-Ala-D-Ala)-di-trans,octa-cis-undecaprenyl diphosphate = [GlcNAc-(1-&gt;4)-Mur2Ac(oyl-L-Ala-gamma-D-Glu-L-Lys-D-Ala-D-Ala)](n+1)-di-trans,octa-cis-undecaprenyl diphosphate + di-trans,octa-cis-undecaprenyl diphosphate + H(+). It participates in cell wall biogenesis; peptidoglycan biosynthesis. Functionally, peptidoglycan polymerase that is essential for cell division. This chain is Probable peptidoglycan glycosyltransferase FtsW, found in Wigglesworthia glossinidia brevipalpis.